The chain runs to 984 residues: Probable beta-galactosidase C (984 aa).

The N-terminal stretch at 1–23 is a signal peptide; that stretch reads MRLLSFIYLVWLALLTGTPQVSA. Residues tyrosine 82, asparagine 127, alanine 128, glutamate 129, and asparagine 187 each coordinate substrate. The active-site Proton donor is the glutamate 188. Asparagine 197 is a glycosylation site (N-linked (GlcNAc...) asparagine). Tyrosine 251 serves as a coordination point for substrate. A disulfide bond links cysteine 257 and cysteine 304. N-linked (GlcNAc...) asparagine glycosylation occurs at asparagine 276. The active-site Nucleophile is the glutamate 287. Tyrosine 353 lines the substrate pocket. Asparagine 391, asparagine 421, asparagine 434, asparagine 517, asparagine 602, asparagine 677, asparagine 715, asparagine 720, asparagine 759, and asparagine 805 each carry an N-linked (GlcNAc...) asparagine glycan.

It belongs to the glycosyl hydrolase 35 family.

Its subcellular location is the secreted. The catalysed reaction is Hydrolysis of terminal non-reducing beta-D-galactose residues in beta-D-galactosides.. Functionally, cleaves beta-linked terminal galactosyl residues from gangliosides, glycoproteins, and glycosaminoglycans. The chain is Probable beta-galactosidase C (lacC) from Aspergillus oryzae (strain ATCC 42149 / RIB 40) (Yellow koji mold).